Consider the following 217-residue polypeptide: Nuclear transcription factor Y subunit C-3 (217 aa).

Over residues 1 to 28 (MDQQGQSSAMNYGSNPYQTNAMTTTPTG) the composition is skewed to polar residues. Disordered regions lie at residues 1–29 (MDQQ…PTGS) and 198–217 (PYMG…DPDN).

This sequence belongs to the NFYC/HAP5 subunit family. As to quaternary structure, heterotrimeric transcription factor composed of three components, NF-YA, NF-YB and NF-YC. NF-YB and NF-YC must interact and dimerize for NF-YA association and DNA binding. In terms of tissue distribution, ubiquitous.

The protein localises to the nucleus. Its function is as follows. Stimulates the transcription of various genes by recognizing and binding to a CCAAT motif in promoters. This chain is Nuclear transcription factor Y subunit C-3 (NFYC3), found in Arabidopsis thaliana (Mouse-ear cress).